A 151-amino-acid chain; its full sequence is Neuroglobin (151 aa).

The Globin domain occupies 1 to 149; that stretch reads MERPESELIR…VVQAMSRGWD (149 aa). His64 and His96 together coordinate heme b.

It belongs to the globin family. In terms of assembly, monomer. Homodimer and homotetramer; disulfide-linked. Mainly monomeric but also detected as part of homodimers and homotetramers. Interacts with 14-3-3 proteins; regulates the phosphorylation of NGB. Could interact (ferrous form) with G-alpha(i) proteins (GTP-bound form). Phosphorylated during hypoxia by ERK1/ERK2. Phosphorylation regulates the heme pocket hexacoordination preventing the association of His-64 with the heme metal center. Thereby, promotes the access of dioxygen and nitrite to the heme and stimulates the nitrite reductase activity. Phosphorylation during hypoxia is stabilized by 14-3-3 proteins. Widely distributed throughout the adult brain, including cerebral cortex, hippocampus, thalamus, hypothalamus, olfactory bulb, and cerebellum.

The protein resides in the cytoplasm. The protein localises to the cytosol. It localises to the mitochondrion matrix. It carries out the reaction Fe(III)-heme b-[protein] + nitric oxide + H2O = Fe(II)-heme b-[protein] + nitrite + 2 H(+). Its function is as follows. Monomeric globin with a bis-histidyl six-coordinate heme-iron atom through which it can bind dioxygen, carbon monoxide and nitric oxide. Could help transport oxygen and increase its availability to the metabolically active neuronal tissues, though its low quantity in tissues as well as its high affinity for dioxygen, which may limit its oxygen-releasing ability, argue against it. The ferrous/deoxygenated form exhibits a nitrite reductase activity and it could produce nitric oxide which in turn inhibits cellular respiration in response to hypoxia. In its ferrous/deoxygenated state, it may also exhibit GDI (Guanine nucleotide Dissociation Inhibitor) activity toward heterotrimeric G-alpha proteins, thereby regulating signal transduction to facilitate neuroprotective responses in the wake of hypoxia and associated oxidative stress. The polypeptide is Neuroglobin (Rattus norvegicus (Rat)).